The sequence spans 158 residues: 6,7-dimethyl-8-ribityllumazine synthase (158 aa).

5-amino-6-(D-ribitylamino)uracil contacts are provided by residues phenylalanine 22, 57–59, and 81–83; these read AVE and AVI. A (2S)-2-hydroxy-3-oxobutyl phosphate-binding site is contributed by 86–87; the sequence is GT. Histidine 89 acts as the Proton donor in catalysis. Position 114 (phenylalanine 114) interacts with 5-amino-6-(D-ribitylamino)uracil. (2S)-2-hydroxy-3-oxobutyl phosphate is bound at residue arginine 128.

Belongs to the DMRL synthase family. In terms of assembly, forms an icosahedral capsid composed of 60 subunits, arranged as a dodecamer of pentamers.

It catalyses the reaction (2S)-2-hydroxy-3-oxobutyl phosphate + 5-amino-6-(D-ribitylamino)uracil = 6,7-dimethyl-8-(1-D-ribityl)lumazine + phosphate + 2 H2O + H(+). The protein operates within cofactor biosynthesis; riboflavin biosynthesis; riboflavin from 2-hydroxy-3-oxobutyl phosphate and 5-amino-6-(D-ribitylamino)uracil: step 1/2. In terms of biological role, catalyzes the formation of 6,7-dimethyl-8-ribityllumazine by condensation of 5-amino-6-(D-ribitylamino)uracil with 3,4-dihydroxy-2-butanone 4-phosphate. This is the penultimate step in the biosynthesis of riboflavin. This Shewanella oneidensis (strain ATCC 700550 / JCM 31522 / CIP 106686 / LMG 19005 / NCIMB 14063 / MR-1) protein is 6,7-dimethyl-8-ribityllumazine synthase.